The sequence spans 585 residues: Probable multidrug resistance ABC transporter ATP-binding/permease protein YheI (585 aa).

The ABC transmembrane type-1 domain maps to 19 to 304; it reads YTIAIVLLLA…IGELINVMQR (286 aa). Transmembrane regions (helical) follow at residues 21–41, 57–77, 127–147, 149–169, 249–269, and 279–299; these read IAIVLLLAVNVIEMFPPKLLG, LLFYIGIFFVLTAAVYIMSYF, AVSLTTGFGILTLVDSTMFMM, IFLTMGFLISWKLTFAAIIPL, VKLLVGASYLIGLGYGAFLVF, and VSFNVYLGMMIWPMFAIGELI. The region spanning 337–572 is the ABC transporter domain; sequence IVFSHVSFTY…NGWYREQYER (236 aa). Residue 371 to 378 participates in ATP binding; sequence GKTGSGKT.

Belongs to the ABC transporter superfamily. As to quaternary structure, heterodimer composed of YheH and YheI.

It is found in the cell membrane. With respect to regulation, inhibited by ortho-vanadate. Functionally, involved in the transport of four structurally unrelated drugs, including doxorubicin and mitoxantrone. Transmembrane domains (TMD) form a pore in the membrane and the ATP-binding domain (NBD) is responsible for energy generation. The protein is Probable multidrug resistance ABC transporter ATP-binding/permease protein YheI (yheI) of Bacillus subtilis (strain 168).